A 276-amino-acid chain; its full sequence is 2-dehydro-3-deoxyphosphooctonate aldolase (276 aa).

Belongs to the KdsA family.

It is found in the cytoplasm. The catalysed reaction is D-arabinose 5-phosphate + phosphoenolpyruvate + H2O = 3-deoxy-alpha-D-manno-2-octulosonate-8-phosphate + phosphate. Its pathway is carbohydrate biosynthesis; 3-deoxy-D-manno-octulosonate biosynthesis; 3-deoxy-D-manno-octulosonate from D-ribulose 5-phosphate: step 2/3. It functions in the pathway bacterial outer membrane biogenesis; lipopolysaccharide biosynthesis. The sequence is that of 2-dehydro-3-deoxyphosphooctonate aldolase from Chelativorans sp. (strain BNC1).